We begin with the raw amino-acid sequence, 286 residues long: Energy-coupling factor transporter ATP-binding protein EcfA2 (286 aa).

Positions 3 to 246 constitute an ABC transporter domain; the sequence is IRFDNVSYTY…KKKLADWHIG (244 aa). ATP is bound at residue 40-47; it reads GQTGSGKS.

It belongs to the ABC transporter superfamily. Energy-coupling factor EcfA family. Forms a stable energy-coupling factor (ECF) transporter complex composed of 2 membrane-embedded substrate-binding proteins (S component), 2 ATP-binding proteins (A component) and 2 transmembrane proteins (T component).

The protein localises to the cell membrane. In terms of biological role, ATP-binding (A) component of a common energy-coupling factor (ECF) ABC-transporter complex. Unlike classic ABC transporters this ECF transporter provides the energy necessary to transport a number of different substrates. The protein is Energy-coupling factor transporter ATP-binding protein EcfA2 of Staphylococcus aureus (strain USA300).